Consider the following 463-residue polypeptide: GTPase Der (463 aa).

EngA-type G domains are found at residues 3–166 and 177–350; these read PVVA…PESG and IRIA…QSAM. GTP-binding positions include 9-16, 56-60, 118-121, 183-190, 230-234, and 295-298; these read GRTNVGKS, DTGGI, NKID, GRPNVGKS, DTAGI, and NKWD. A KH-like domain is found at 351 to 435; it reads LDLSASRLTQ…PLKLVFKSAE (85 aa).

The protein belongs to the TRAFAC class TrmE-Era-EngA-EngB-Septin-like GTPase superfamily. EngA (Der) GTPase family. As to quaternary structure, associates with the 50S ribosomal subunit.

Functionally, GTPase that plays an essential role in the late steps of ribosome biogenesis. This Methylococcus capsulatus (strain ATCC 33009 / NCIMB 11132 / Bath) protein is GTPase Der.